A 193-amino-acid chain; its full sequence is dITP/XTP pyrophosphatase (193 aa).

Position 7–12 (7–12 (SENENK)) interacts with substrate. Residue aspartate 65 is the Proton acceptor of the active site. A Mg(2+)-binding site is contributed by aspartate 65. Substrate is bound by residues serine 66, 144–147 (FGYD), lysine 167, and 172–173 (HR).

Belongs to the HAM1 NTPase family. As to quaternary structure, homodimer. Mg(2+) is required as a cofactor.

The enzyme catalyses XTP + H2O = XMP + diphosphate + H(+). The catalysed reaction is dITP + H2O = dIMP + diphosphate + H(+). It carries out the reaction ITP + H2O = IMP + diphosphate + H(+). Functionally, pyrophosphatase that catalyzes the hydrolysis of nucleoside triphosphates to their monophosphate derivatives, with a high preference for the non-canonical purine nucleotides XTP (xanthosine triphosphate), dITP (deoxyinosine triphosphate) and ITP. Seems to function as a house-cleaning enzyme that removes non-canonical purine nucleotides from the nucleotide pool, thus preventing their incorporation into DNA/RNA and avoiding chromosomal lesions. The chain is dITP/XTP pyrophosphatase from Tropheryma whipplei (strain TW08/27) (Whipple's bacillus).